We begin with the raw amino-acid sequence, 354 residues long: UDP-N-acetylglucosamine--N-acetylmuramyl-(pentapeptide) pyrophosphoryl-undecaprenol N-acetylglucosamine transferase (354 aa).

UDP-N-acetyl-alpha-D-glucosamine is bound by residues 14-16 (TGG), asparagine 126, arginine 162, serine 190, isoleucine 243, 262-267 (ALTVSE), and glutamine 287.

It belongs to the glycosyltransferase 28 family. MurG subfamily.

The protein resides in the cell inner membrane. It carries out the reaction di-trans,octa-cis-undecaprenyl diphospho-N-acetyl-alpha-D-muramoyl-L-alanyl-D-glutamyl-meso-2,6-diaminopimeloyl-D-alanyl-D-alanine + UDP-N-acetyl-alpha-D-glucosamine = di-trans,octa-cis-undecaprenyl diphospho-[N-acetyl-alpha-D-glucosaminyl-(1-&gt;4)]-N-acetyl-alpha-D-muramoyl-L-alanyl-D-glutamyl-meso-2,6-diaminopimeloyl-D-alanyl-D-alanine + UDP + H(+). The protein operates within cell wall biogenesis; peptidoglycan biosynthesis. In terms of biological role, cell wall formation. Catalyzes the transfer of a GlcNAc subunit on undecaprenyl-pyrophosphoryl-MurNAc-pentapeptide (lipid intermediate I) to form undecaprenyl-pyrophosphoryl-MurNAc-(pentapeptide)GlcNAc (lipid intermediate II). This chain is UDP-N-acetylglucosamine--N-acetylmuramyl-(pentapeptide) pyrophosphoryl-undecaprenol N-acetylglucosamine transferase, found in Photobacterium profundum (strain SS9).